The sequence spans 134 residues: DNA-binding protein H-NS, plasmid (134 aa).

Positions 23–67 form a coiled coil; sequence LEILEELLEKLSVVVEERRQEESSKEAELKARLEKIESLRQLMLE. The segment at 77 to 96 is disordered; that stretch reads SSFSAKSGAPKKVREPRPAK. The DNA-binding element occupies 112–117; it reads QGRTPK.

This sequence belongs to the histone-like protein H-NS family. Homodimer that oligomerizes on DNA into higher-order complexes that form bridges between disparate regions of DNA compacting it. Interacts with Hha, YdgT and StpA.

Its subcellular location is the cytoplasm. The protein resides in the nucleoid. A DNA-binding protein implicated in transcriptional repression and chromosome organization and compaction. Binds DNA, modifying gene expression, especially non-core genes. Does not regulate the same set of genes as its chromosomal counterpart (tested in S.typhimurium strain SL1344 / SV5015, chromosomal H-NS protein is AC A0A0H3NBY9). Thus it has a not-completely overlapping set of gene targets compared to its chromosomal homolog; many of these target genes are either plasmid-encoded or acquired by horizontally transferred genes (HTG). This protein can function in the absence of H-NS-modulating protein Hha (either chromosomal or plasmid-encoded), although many HTG genes are regulated by an H-NS/Hha complex. Binds nucleation sites in AT-rich DNA and bridges them, forming higher-order nucleoprotein complexes and condensing the chromosome. A subset of genes are repressed by H-NS in association with Hha and/or Cnu (ydgT). The chain is DNA-binding protein H-NS, plasmid (hns) from Salmonella typhi.